A 93-amino-acid polypeptide reads, in one-letter code: Probable Fe(2+)-trafficking protein (93 aa).

The protein belongs to the Fe(2+)-trafficking protein family.

Could be a mediator in iron transactions between iron acquisition and iron-requiring processes, such as synthesis and/or repair of Fe-S clusters in biosynthetic enzymes. In Acidithiobacillus ferrooxidans (strain ATCC 23270 / DSM 14882 / CIP 104768 / NCIMB 8455) (Ferrobacillus ferrooxidans (strain ATCC 23270)), this protein is Probable Fe(2+)-trafficking protein.